We begin with the raw amino-acid sequence, 149 residues long: Putative pre-16S rRNA nuclease (149 aa).

Belongs to the YqgF nuclease family.

The protein resides in the cytoplasm. Could be a nuclease involved in processing of the 5'-end of pre-16S rRNA. This chain is Putative pre-16S rRNA nuclease, found in Heliobacterium modesticaldum (strain ATCC 51547 / Ice1).